Reading from the N-terminus, the 108-residue chain is DNA-directed RNA polymerase III subunit RPC10 (108 aa).

6 residues coordinate Zn(2+): cysteine 5, cysteine 8, cysteine 25, cysteine 28, cysteine 69, and cysteine 72. The segment at cysteine 5–cysteine 28 adopts a C4-type zinc-finger fold. The TFIIS-type zinc-finger motif lies at threonine 65–arginine 107. Residues aspartate 88–glutamate 89 carry the Hairpin motif. Residues cysteine 98 and cysteine 102 each contribute to the Zn(2+) site.

The protein belongs to the archaeal RpoM/eukaryotic RPA12/RPB9/RPC11 RNA polymerase family. As to quaternary structure, component of the RNA polymerase III complex consisting of 17 subunits: a ten-subunit horseshoe-shaped catalytic core composed of POLR3A/RPC1, POLR3B/RPC2, POLR1C/RPAC1, POLR1D/RPAC2, POLR3K/RPC10, POLR2E/RPABC1, POLR2F/RPABC2, POLR2H/RPABC3, POLR2K/RPABC4 and POLR2L/RPABC5; a mobile stalk composed of two subunits POLR3H/RPC8 and CRCP/RPC9, protruding from the core and functioning primarily in transcription initiation; and additional subunits homologous to general transcription factors of the RNA polymerase II machinery, POLR3C/RPC3-POLR3F/RPC6-POLR3G/RPC7 heterotrimer required for transcription initiation and POLR3D/RPC4-POLR3E/RPC5 heterodimer involved in both transcription initiation and termination.

The protein resides in the nucleus. Functionally, core component of RNA polymerase III (Pol III) which synthesizes small non-coding RNAs using the four ribonucleoside triphosphates as substrates. Can mediate Pol I proofreading of the nascent RNA transcript. Anchors into the Pol III active site to constantly monitor transcription fidelity, cleaves mis-incorporated 5'-ribonucleotides and restarts the transcription process. Once Pol III reaches the poly(dT) termination signal, can induce Pol III clamp opening and transcription termination. Pol III plays an important role in sensing and limiting infection by intracellular bacteria and DNA viruses. Acts as a nuclear and cytosolic DNA sensor involved in innate immune response. Can sense non-self dsDNA that serves as template for transcription into dsRNA. The non-self RNA polymerase III transcripts, such as Epstein-Barr virus-encoded RNAs (EBERs) induce type I interferon and NF-kappa-B through the RIG-I pathway. The protein is DNA-directed RNA polymerase III subunit RPC10 (POLR3K) of Bos taurus (Bovine).